A 254-amino-acid polypeptide reads, in one-letter code: Probable pectate lyase E (254 aa).

Positions 1–17 (MYQPLLLLPLLLTSAFA) are cleaved as a signal peptide. Asparagine 175 is a glycosylation site (N-linked (GlcNAc...) asparagine). Residues 227 to 254 (TDNNDKEPKKKGSGPSNACKYKEPLSKC) form a disordered region.

It belongs to the polysaccharide lyase 3 family. Ca(2+) serves as cofactor.

The protein resides in the secreted. The enzyme catalyses Eliminative cleavage of (1-&gt;4)-alpha-D-galacturonan to give oligosaccharides with 4-deoxy-alpha-D-galact-4-enuronosyl groups at their non-reducing ends.. Pectinolytic enzyme consist of four classes of enzymes: pectin lyase, polygalacturonase, pectin methylesterase and rhamnogalacturonase. Among pectinolytic enzymes, pectin lyase is the most important in depolymerization of pectin, since it cleaves internal glycosidic bonds of highly methylated pectins. Favors pectate, the anion, over pectin, the methyl ester. The polypeptide is Probable pectate lyase E (plyE) (Neosartorya fischeri (strain ATCC 1020 / DSM 3700 / CBS 544.65 / FGSC A1164 / JCM 1740 / NRRL 181 / WB 181) (Aspergillus fischerianus)).